The chain runs to 309 residues: Elongation factor Ts (309 aa).

The interval 82–85 is involved in Mg(2+) ion dislocation from EF-Tu; it reads TDFV.

This sequence belongs to the EF-Ts family.

The protein localises to the cytoplasm. Associates with the EF-Tu.GDP complex and induces the exchange of GDP to GTP. It remains bound to the aminoacyl-tRNA.EF-Tu.GTP complex up to the GTP hydrolysis stage on the ribosome. The polypeptide is Elongation factor Ts (Rickettsia typhi (strain ATCC VR-144 / Wilmington)).